The chain runs to 323 residues: MPTYTKLTAMGQYVPGRVVDNDELAAIMDTSDEWIQAHTGIKTRHYAMNDENTSDLATQVAQQLLQKSGLAASAIDLILVTTITPDALTPATACLVQANIGADNAFAFDLSAACAGFTFGLATADKFIRSGQYQNVMVISAEVNSKMMDFQDRTAAVFFGDGAGGALLQATDNPDENSLIAEKLESQGNATVIHSGRVRPITEVAATNYPQTDAFYQVGRDVFQFATTVVPEQMRGLIASAQLTPSDLQYVICHQANLRIIEKIAANLALPMTKFPHNVDHYGNTSSAGVAMALANVFDTLTGPVLLTAFGGGLAYGSVLIKK.

Active-site residues include C114 and H254. An ACP-binding region spans residues 255–259; it reads QANLR. Residue N284 is part of the active site.

Belongs to the thiolase-like superfamily. FabH family. As to quaternary structure, homodimer.

It is found in the cytoplasm. The catalysed reaction is malonyl-[ACP] + acetyl-CoA + H(+) = 3-oxobutanoyl-[ACP] + CO2 + CoA. Its pathway is lipid metabolism; fatty acid biosynthesis. Its function is as follows. Catalyzes the condensation reaction of fatty acid synthesis by the addition to an acyl acceptor of two carbons from malonyl-ACP. Catalyzes the first condensation reaction which initiates fatty acid synthesis and may therefore play a role in governing the total rate of fatty acid production. Possesses both acetoacetyl-ACP synthase and acetyl transacylase activities. Its substrate specificity determines the biosynthesis of branched-chain and/or straight-chain of fatty acids. In Lactiplantibacillus plantarum (strain ATCC BAA-793 / NCIMB 8826 / WCFS1) (Lactobacillus plantarum), this protein is Beta-ketoacyl-[acyl-carrier-protein] synthase III 1.